The sequence spans 69 residues: MPLTVNCPICKAPVEWVPQSAFKPFCSERCKLIDLGDWASEKHVIPVKAEFDPEAFDEFDLDKGDFFKE.

Cysteine 7, cysteine 10, cysteine 26, and cysteine 30 together coordinate Zn(2+).

The protein belongs to the DNA gyrase inhibitor YacG family. Interacts with GyrB. Zn(2+) serves as cofactor.

In terms of biological role, inhibits all the catalytic activities of DNA gyrase by preventing its interaction with DNA. Acts by binding directly to the C-terminal domain of GyrB, which probably disrupts DNA binding by the gyrase. This is DNA gyrase inhibitor YacG from Shewanella baltica (strain OS223).